Reading from the N-terminus, the 272-residue chain is Ribosomal RNA small subunit methyltransferase J (272 aa).

Residues 120–121, 136–137, 171–172, and D188 each bind S-adenosyl-L-methionine; these read RD, ER, and SS.

The protein belongs to the methyltransferase superfamily. RsmJ family.

The protein resides in the cytoplasm. The catalysed reaction is guanosine(1516) in 16S rRNA + S-adenosyl-L-methionine = N(2)-methylguanosine(1516) in 16S rRNA + S-adenosyl-L-homocysteine + H(+). Its function is as follows. Specifically methylates the guanosine in position 1516 of 16S rRNA. This is Ribosomal RNA small subunit methyltransferase J from Colwellia psychrerythraea (strain 34H / ATCC BAA-681) (Vibrio psychroerythus).